The primary structure comprises 185 residues: uncharacterized protein (185 aa).

The Cytoplasmic segment spans residues 1–69 (MSSFIDSIKS…SSDCSRAERT (69 aa)). A helical transmembrane segment spans residues 70–90 (FNLILFAIVDLVICCESMAFF). A topological domain (extracellular) is located at residue asparagine 91. The chain crosses the membrane as a helical span at residues 92 to 112 (LLLKLPSMLLVSFLTMLVFSI). The Cytoplasmic segment spans residues 113–118 (SYSWSA). The helical transmembrane segment at 119-139 (FNWISFAFSSASFLMKACILF) threads the bilayer. At 140 to 185 (NSSFTWFGVKAVIAEDMLYRMVRGLFCASFVKQLQTTFLATAIVLC) the chain is on the extracellular side.

It localises to the membrane. This is an uncharacterized protein from Saccharomyces cerevisiae (strain ATCC 204508 / S288c) (Baker's yeast).